The chain runs to 249 residues: Tetraspanin-18 (249 aa).

The Cytoplasmic portion of the chain corresponds to 1–13; sequence MEGDCLSCMKYLM. A helical transmembrane segment spans residues 14–34; it reads FVFNFFIFLGGACLLGIGIWV. Over 35–49 the chain is Extracellular; the sequence is MVDPTGFREIVAANP. The chain crosses the membrane as a helical span at residues 50 to 70; sequence LLITGAYILLAMGGLLFLLGF. The Cytoplasmic segment spans residues 71-83; the sequence is LGCCGAVRENKCL. Residues 84–104 form a helical membrane-spanning segment; the sequence is LLFFFLFILIIFLAELSAAIL. Topologically, residues 105 to 223 are extracellular; it reads AFIFRGNLTR…AFETYVYLAG (119 aa). Residues N111 and N129 are each glycosylated (N-linked (GlcNAc...) asparagine). A helical transmembrane segment spans residues 224 to 244; the sequence is ALAIGVLAIELFAMIFAMCLF. At 245–249 the chain is on the cytoplasmic side; the sequence is RGIIQ.

The protein belongs to the tetraspanin (TM4SF) family. In terms of assembly, interacts with ORAI1; this interaction regulates ORAI1 exit from the endoplasmic (ER), and/or Golgi, and trafficking to the cell surface.

It localises to the membrane. Plays a role in the cell surface localization of ORAI1 and may participate in the regulation of Ca(2+) signaling and the VWF release in response to inflammatory stimuli. In Bos taurus (Bovine), this protein is Tetraspanin-18.